The primary structure comprises 367 residues: Endopolygalacturonase B (367 aa).

The N-terminal stretch at 1 to 17 is a signal peptide; the sequence is MHFQLLGLAALGSLAAA. Positions 18–30 are excised as a propeptide; sequence APAPSRTSELVER. Cys-34 and Cys-49 are disulfide-bonded. 5 PbH1 repeats span residues 161-191, 192-213, 214-234, 243-264, and 272-294; these read GNDVHLTDITIDNSDGDNNGGHNTDAFDVSE, SNGVYITGANVKNQDDCLAINS, GENIEFTGATCSGGHGISIGS, VKNVKVADSTVVDSDNGIRIKT, and VSGVTYENITLKNIKKNGIVIEQ. Asp-206 serves as the catalytic Proton donor. Cys-208 and Cys-224 are oxidised to a cystine. The active site involves His-228. N-linked (GlcNAc...) asparagine glycosylation is present at Asn-279. Disulfide bonds link Cys-334-Cys-339 and Cys-358-Cys-367.

It belongs to the glycosyl hydrolase 28 family.

The protein localises to the secreted. It carries out the reaction (1,4-alpha-D-galacturonosyl)n+m + H2O = (1,4-alpha-D-galacturonosyl)n + (1,4-alpha-D-galacturonosyl)m.. Its function is as follows. Involved in maceration and soft-rotting of plant tissue. Hydrolyzes the 1,4-alpha glycosidic bonds of de-esterified pectate in the smooth region of the plant cell wall. The protein is Endopolygalacturonase B (pgaB) of Aspergillus flavus (strain ATCC MYA-384 / AF70).